A 351-amino-acid polypeptide reads, in one-letter code: Histidinol-phosphate aminotransferase (351 aa).

Lysine 213 is subject to N6-(pyridoxal phosphate)lysine.

Belongs to the class-II pyridoxal-phosphate-dependent aminotransferase family. Histidinol-phosphate aminotransferase subfamily. As to quaternary structure, homodimer. Pyridoxal 5'-phosphate is required as a cofactor.

The enzyme catalyses L-histidinol phosphate + 2-oxoglutarate = 3-(imidazol-4-yl)-2-oxopropyl phosphate + L-glutamate. It functions in the pathway amino-acid biosynthesis; L-histidine biosynthesis; L-histidine from 5-phospho-alpha-D-ribose 1-diphosphate: step 7/9. This is Histidinol-phosphate aminotransferase from Clostridium kluyveri (strain NBRC 12016).